The sequence spans 207 residues: Urease accessory protein UreG (207 aa).

16 to 23 (GPVGSGKT) provides a ligand contact to GTP.

It belongs to the SIMIBI class G3E GTPase family. UreG subfamily. As to quaternary structure, homodimer. UreD, UreF and UreG form a complex that acts as a GTP-hydrolysis-dependent molecular chaperone, activating the urease apoprotein by helping to assemble the nickel containing metallocenter of UreC. The UreE protein probably delivers the nickel.

The protein resides in the cytoplasm. Facilitates the functional incorporation of the urease nickel metallocenter. This process requires GTP hydrolysis, probably effectuated by UreG. This chain is Urease accessory protein UreG, found in Cupriavidus metallidurans (strain ATCC 43123 / DSM 2839 / NBRC 102507 / CH34) (Ralstonia metallidurans).